We begin with the raw amino-acid sequence, 156 residues long: Small ribosomal subunit protein uS7 (156 aa).

It belongs to the universal ribosomal protein uS7 family. As to quaternary structure, part of the 30S ribosomal subunit. Contacts proteins S9 and S11.

Functionally, one of the primary rRNA binding proteins, it binds directly to 16S rRNA where it nucleates assembly of the head domain of the 30S subunit. Is located at the subunit interface close to the decoding center, probably blocks exit of the E-site tRNA. This is Small ribosomal subunit protein uS7 from Desulfosudis oleivorans (strain DSM 6200 / JCM 39069 / Hxd3) (Desulfococcus oleovorans).